The following is a 217-amino-acid chain: 3,4-dihydroxy-2-butanone 4-phosphate synthase (217 aa).

D-ribulose 5-phosphate contacts are provided by residues 37–38, Asp42, 150–154, and Glu174; these read RE and RRGHT. Residue Glu38 coordinates Mg(2+). His153 is a Mg(2+) binding site.

It belongs to the DHBP synthase family. Homodimer. Requires Mg(2+) as cofactor. Mn(2+) is required as a cofactor.

The enzyme catalyses D-ribulose 5-phosphate = (2S)-2-hydroxy-3-oxobutyl phosphate + formate + H(+). It participates in cofactor biosynthesis; riboflavin biosynthesis; 2-hydroxy-3-oxobutyl phosphate from D-ribulose 5-phosphate: step 1/1. In terms of biological role, catalyzes the conversion of D-ribulose 5-phosphate to formate and 3,4-dihydroxy-2-butanone 4-phosphate. The protein is 3,4-dihydroxy-2-butanone 4-phosphate synthase of Shewanella woodyi (strain ATCC 51908 / MS32).